We begin with the raw amino-acid sequence, 127 residues long: Translation initiation factor 5A (127 aa).

At K36 the chain carries Hypusine.

This sequence belongs to the eIF-5A family.

It localises to the cytoplasm. Functions by promoting the formation of the first peptide bond. The polypeptide is Translation initiation factor 5A (eif5a) (Halobacterium salinarum (strain ATCC 700922 / JCM 11081 / NRC-1) (Halobacterium halobium)).